Reading from the N-terminus, the 246-residue chain is tRNA pseudouridine synthase A (246 aa).

Catalysis depends on Asp53, which acts as the Nucleophile. Tyr111 is a binding site for substrate.

The protein belongs to the tRNA pseudouridine synthase TruA family. Homodimer.

The enzyme catalyses uridine(38/39/40) in tRNA = pseudouridine(38/39/40) in tRNA. In terms of biological role, formation of pseudouridine at positions 38, 39 and 40 in the anticodon stem and loop of transfer RNAs. The protein is tRNA pseudouridine synthase A of Lysinibacillus sphaericus (strain C3-41).